A 228-amino-acid chain; its full sequence is Cytidylate kinase (228 aa).

ATP is bound at residue Gly-17–Thr-25.

It belongs to the cytidylate kinase family. Type 1 subfamily.

It is found in the cytoplasm. The enzyme catalyses CMP + ATP = CDP + ADP. It carries out the reaction dCMP + ATP = dCDP + ADP. The protein is Cytidylate kinase of Paraburkholderia phytofirmans (strain DSM 17436 / LMG 22146 / PsJN) (Burkholderia phytofirmans).